Here is a 215-residue protein sequence, read N- to C-terminus: Protein slowmo (215 aa).

The region spanning 1 to 170 (MKIWTSEHIF…VIGLINTEVK (170 aa)) is the PRELI/MSF1 domain.

The protein belongs to the slowmo family. Expressed in specific tissues such as the developing central nervous system (CNS) and both the male and female germline. In the CNS, it is restricted in a subset of cells during embryogenesis and early larval development. In embryos, it is also expressed in salivary glands. In the testis, expressed in somatic cyst cells throughout the distal region where the mitotic cysts develop, extending through to meiotic cysts.

Its subcellular location is the mitochondrion. Required to regulate peristaltic movement and also for germline proliferation in males and females. This chain is Protein slowmo (slmo), found in Drosophila melanogaster (Fruit fly).